Consider the following 261-residue polypeptide: Indole-3-glycerol phosphate synthase (261 aa).

It belongs to the TrpC family.

It catalyses the reaction 1-(2-carboxyphenylamino)-1-deoxy-D-ribulose 5-phosphate + H(+) = (1S,2R)-1-C-(indol-3-yl)glycerol 3-phosphate + CO2 + H2O. Its pathway is amino-acid biosynthesis; L-tryptophan biosynthesis; L-tryptophan from chorismate: step 4/5. The sequence is that of Indole-3-glycerol phosphate synthase from Paraburkholderia xenovorans (strain LB400).